A 295-amino-acid chain; its full sequence is 4-hydroxy-tetrahydrodipicolinate synthase (295 aa).

Thr-46 provides a ligand contact to pyruvate. Tyr-135 functions as the Proton donor/acceptor in the catalytic mechanism. Lys-164 serves as the catalytic Schiff-base intermediate with substrate. Ile-205 serves as a coordination point for pyruvate.

The protein belongs to the DapA family. In terms of assembly, homotetramer; dimer of dimers.

The protein resides in the cytoplasm. It carries out the reaction L-aspartate 4-semialdehyde + pyruvate = (2S,4S)-4-hydroxy-2,3,4,5-tetrahydrodipicolinate + H2O + H(+). It functions in the pathway amino-acid biosynthesis; L-lysine biosynthesis via DAP pathway; (S)-tetrahydrodipicolinate from L-aspartate: step 3/4. Catalyzes the condensation of (S)-aspartate-beta-semialdehyde [(S)-ASA] and pyruvate to 4-hydroxy-tetrahydrodipicolinate (HTPA). The polypeptide is 4-hydroxy-tetrahydrodipicolinate synthase (Wolinella succinogenes (strain ATCC 29543 / DSM 1740 / CCUG 13145 / JCM 31913 / LMG 7466 / NCTC 11488 / FDC 602W) (Vibrio succinogenes)).